The primary structure comprises 352 residues: Isopentenyl-diphosphate delta-isomerase (352 aa).

6-7 (RK) is a substrate binding site. Residues 63–65 (AMT), Ser-93, and Asn-122 each bind FMN. Residue 93 to 95 (SQR) coordinates substrate. Residue Gln-160 participates in substrate binding. Glu-161 lines the Mg(2+) pocket. FMN contacts are provided by residues Lys-192, Thr-221, 271-273 (GIR), and 292-293 (SQ).

It belongs to the IPP isomerase type 2 family. In terms of assembly, homooctamer. Dimer of tetramers. FMN serves as cofactor. NADPH is required as a cofactor. It depends on Mg(2+) as a cofactor.

Its subcellular location is the cytoplasm. The enzyme catalyses isopentenyl diphosphate = dimethylallyl diphosphate. In terms of biological role, involved in the biosynthesis of isoprenoids. Catalyzes the 1,3-allylic rearrangement of the homoallylic substrate isopentenyl (IPP) to its allylic isomer, dimethylallyl diphosphate (DMAPP). The polypeptide is Isopentenyl-diphosphate delta-isomerase (Pyrobaculum arsenaticum (strain DSM 13514 / JCM 11321 / PZ6)).